The sequence spans 223 residues: Flagellar L-ring protein (223 aa).

The first 18 residues, 1–18 (MKKSLMALIVVGSFLLSA), serve as a signal peptide directing secretion. A lipid anchor (N-palmitoyl cysteine) is attached at C19. C19 is lipidated: S-diacylglycerol cysteine.

This sequence belongs to the FlgH family. In terms of assembly, the basal body constitutes a major portion of the flagellar organelle and consists of four rings (L,P,S, and M) mounted on a central rod.

It localises to the cell outer membrane. The protein localises to the bacterial flagellum basal body. Assembles around the rod to form the L-ring and probably protects the motor/basal body from shearing forces during rotation. The sequence is that of Flagellar L-ring protein from Herminiimonas arsenicoxydans.